A 1011-amino-acid polypeptide reads, in one-letter code: E3 ubiquitin-protein ligase mib1 (1011 aa).

Positions 6 to 74 (NNRVMVEGVG…AYDLRIMDSA (69 aa)) constitute an MIB/HERC2 1 domain. A ZZ-type zinc finger spans residues 80 to 132 (HDGTMCDTCRQQPIIGIRWKCAECTNYDLCTVCYHGDKHHLRHRFYRITTPGS). Positions 85, 88, 100, 103, 109, 112, 118, and 122 each coordinate Zn(2+). Positions 143–221 (SKKITARGIF…MSDLKCVQDA (79 aa)) constitute an MIB/HERC2 2 domain. ANK repeat units follow at residues 430–460 (DLNEELVKAAANGDVAKVDDLLKRQDVDVNG), 463–492 (AGHTAMQAASQNGHVDILKLLLKHSVDVEA), 496–525 (DGDRAVHHAAFGDEGTVIEVLQRGGADLNA), 529–558 (RRQTPLHIAVNKGHLQVVKKLLDFSCHPSL), 562–591 (EGDTPLHDAISKKRDDILAVLLEAGADVTI), 595–627 (NGFNALHHAALRGNPSAMRVLLSKLPRPWIVDE), 631–661 (DGYTALHLAALNNHVEVAELLVHQGSANLDI), 665–694 (NQQTALHLAVERQHTQIVRLLVRAEAKLDI), and 698–729 (DGDTPLHEALRHHTLSQLRQLQDMQDVGKVDT). 2 consecutive RING-type zinc fingers follow at residues 820 to 855 (CMVCSDLKRDTLFGPCGHIATCSLCSPRVKKCLLCK) and 867 to 902 (CVVCSDKKAAVLFQPCGHMCACENCASLMKKCVQCR). The stretch at 936–963 (QKDKDNTNVNADVQKLQQQLQDIKEQTM) forms a coiled coil. An RING-type 3 zinc finger spans residues 964-997 (CPVCLDRLKNMIFMCGHGTCQLCGDRMSECPICR).

Its subcellular location is the cytoplasm. It is found in the cytoskeleton. The protein resides in the microtubule organizing center. The protein localises to the centrosome. It localises to the centriolar satellite. It catalyses the reaction S-ubiquitinyl-[E2 ubiquitin-conjugating enzyme]-L-cysteine + [acceptor protein]-L-lysine = [E2 ubiquitin-conjugating enzyme]-L-cysteine + N(6)-ubiquitinyl-[acceptor protein]-L-lysine.. Its pathway is protein modification; protein ubiquitination. Its function is as follows. E3 ubiquitin-protein ligase that mediates ubiquitination of Delta receptors, which act as ligands of Notch proteins. Positively regulates the Delta-mediated Notch signaling by ubiquitinating the intracellular domain of Delta, leading to endocytosis of Delta receptors. This chain is E3 ubiquitin-protein ligase mib1 (mib1), found in Xenopus laevis (African clawed frog).